Consider the following 149-residue polypeptide: UPF0178 protein CPF_2548 (149 aa).

The protein belongs to the UPF0178 family.

This is UPF0178 protein CPF_2548 from Clostridium perfringens (strain ATCC 13124 / DSM 756 / JCM 1290 / NCIMB 6125 / NCTC 8237 / Type A).